The chain runs to 535 residues: CTP synthase (535 aa).

Positions 1-268 (MKTKYIFVTG…DSLVCKKLEL (268 aa)) are amidoligase domain. S14 serves as a coordination point for CTP. S14 serves as a coordination point for UTP. 15–20 (SLGKGI) is a binding site for ATP. Y55 serves as a coordination point for L-glutamine. D72 serves as a coordination point for ATP. Mg(2+)-binding residues include D72 and E142. CTP contacts are provided by residues 149–151 (DIE), 189–194 (KTKPTQ), and K225. Residues 189–194 (KTKPTQ) and K225 each bind UTP. The Glutamine amidotransferase type-1 domain maps to 293–535 (TIGLVGKYVE…IKVACTVKEK (243 aa)). G355 is a binding site for L-glutamine. The active-site Nucleophile; for glutamine hydrolysis is the C382. L-glutamine contacts are provided by residues 383-386 (LGMQ), E406, and R463. Residues H508 and E510 contribute to the active site.

The protein belongs to the CTP synthase family. As to quaternary structure, homotetramer.

It carries out the reaction UTP + L-glutamine + ATP + H2O = CTP + L-glutamate + ADP + phosphate + 2 H(+). The catalysed reaction is L-glutamine + H2O = L-glutamate + NH4(+). The enzyme catalyses UTP + NH4(+) + ATP = CTP + ADP + phosphate + 2 H(+). Its pathway is pyrimidine metabolism; CTP biosynthesis via de novo pathway; CTP from UDP: step 2/2. Allosterically activated by GTP, when glutamine is the substrate; GTP has no effect on the reaction when ammonia is the substrate. The allosteric effector GTP functions by stabilizing the protein conformation that binds the tetrahedral intermediate(s) formed during glutamine hydrolysis. Inhibited by the product CTP, via allosteric rather than competitive inhibition. In terms of biological role, catalyzes the ATP-dependent amination of UTP to CTP with either L-glutamine or ammonia as the source of nitrogen. Regulates intracellular CTP levels through interactions with the four ribonucleotide triphosphates. The sequence is that of CTP synthase from Clostridium acetobutylicum (strain ATCC 824 / DSM 792 / JCM 1419 / IAM 19013 / LMG 5710 / NBRC 13948 / NRRL B-527 / VKM B-1787 / 2291 / W).